A 340-amino-acid chain; its full sequence is Phenylalanine--tRNA ligase alpha subunit (340 aa).

E255 is a Mg(2+) binding site.

Belongs to the class-II aminoacyl-tRNA synthetase family. Phe-tRNA synthetase alpha subunit type 1 subfamily. As to quaternary structure, tetramer of two alpha and two beta subunits. The cofactor is Mg(2+).

It localises to the cytoplasm. The enzyme catalyses tRNA(Phe) + L-phenylalanine + ATP = L-phenylalanyl-tRNA(Phe) + AMP + diphosphate + H(+). This Moorella thermoacetica (strain ATCC 39073 / JCM 9320) protein is Phenylalanine--tRNA ligase alpha subunit.